The sequence spans 114 residues: T cell receptor beta variable 5-6 (114 aa).

A signal peptide spans 1-21 (MGPGLLCWALLCLLGAGLVDA). The 93-residue stretch at 22 to 114 (GVTQSPTHLI…SALYLCASSL (93 aa)) folds into the Ig-like domain. Cys-42 and Cys-110 are disulfide-bonded. Residue Asn-90 is glycosylated (N-linked (GlcNAc...) asparagine).

As to quaternary structure, alpha-beta TR is a heterodimer composed of an alpha and beta chain; disulfide-linked. The alpha-beta TR is associated with the transmembrane signaling CD3 coreceptor proteins to form the TR-CD3 (TcR or TCR). The assembly of alpha-beta TR heterodimers with CD3 occurs in the endoplasmic reticulum where a single alpha-beta TR heterodimer associates with one CD3D-CD3E heterodimer, one CD3G-CD3E heterodimer and one CD247 homodimer forming a stable octameric structure. CD3D-CD3E and CD3G-CD3E heterodimers preferentially associate with TR alpha and TR beta chains, respectively. The association of the CD247 homodimer is the last step of TcR assembly in the endoplasmic reticulum and is required for transport to the cell surface.

It is found in the cell membrane. In terms of biological role, v region of the variable domain of T cell receptor (TR) beta chain that participates in the antigen recognition. Alpha-beta T cell receptors are antigen specific receptors which are essential to the immune response and are present on the cell surface of T lymphocytes. Recognize peptide-major histocompatibility (MH) (pMH) complexes that are displayed by antigen presenting cells (APC), a prerequisite for efficient T cell adaptive immunity against pathogens. Binding of alpha-beta TR to pMH complex initiates TR-CD3 clustering on the cell surface and intracellular activation of LCK that phosphorylates the ITAM motifs of CD3G, CD3D, CD3E and CD247 enabling the recruitment of ZAP70. In turn ZAP70 phosphorylates LAT, which recruits numerous signaling molecules to form the LAT signalosome. The LAT signalosome propagates signal branching to three major signaling pathways, the calcium, the mitogen-activated protein kinase (MAPK) kinase and the nuclear factor NF-kappa-B (NF-kB) pathways, leading to the mobilization of transcription factors that are critical for gene expression and essential for T cell growth and differentiation. The T cell repertoire is generated in the thymus, by V-(D)-J rearrangement. This repertoire is then shaped by intrathymic selection events to generate a peripheral T cell pool of self-MH restricted, non-autoaggressive T cells. Post-thymic interaction of alpha-beta TR with the pMH complexes shapes TR structural and functional avidity. This Homo sapiens (Human) protein is T cell receptor beta variable 5-6.